A 136-amino-acid chain; its full sequence is Aspartate 1-decarboxylase (136 aa).

Catalysis depends on Ser-25, which acts as the Schiff-base intermediate with substrate; via pyruvic acid. Pyruvic acid (Ser) is present on Ser-25. Thr-57 lines the substrate pocket. Tyr-58 (proton donor) is an active-site residue. 73–75 (GAA) is a binding site for substrate. Residues 117-136 (IFQLGEETTPEEAPSLEQRN) are disordered.

It belongs to the PanD family. In terms of assembly, heterooctamer of four alpha and four beta subunits. Pyruvate serves as cofactor. Post-translationally, is synthesized initially as an inactive proenzyme, which is activated by self-cleavage at a specific serine bond to produce a beta-subunit with a hydroxyl group at its C-terminus and an alpha-subunit with a pyruvoyl group at its N-terminus.

Its subcellular location is the cytoplasm. It carries out the reaction L-aspartate + H(+) = beta-alanine + CO2. It participates in cofactor biosynthesis; (R)-pantothenate biosynthesis; beta-alanine from L-aspartate: step 1/1. Its function is as follows. Catalyzes the pyruvoyl-dependent decarboxylation of aspartate to produce beta-alanine. In Chloroherpeton thalassium (strain ATCC 35110 / GB-78), this protein is Aspartate 1-decarboxylase.